The following is a 117-amino-acid chain: PBP1-interacting protein XAC1 (117 aa).

Residues 1–60 are disordered; that stretch reads MSKAPSQPAKKWMSARTLAKSEDATNRKSNTAAPASQPSQQPASVMHERPTPPPPAPVQL. A compositionally biased stretch (low complexity) spans 32–44; it reads AAPASQPSQQPAS.

In terms of assembly, forms a complex composed of at least MKT1, PBP1, XAC1 and LSM12. Forms a complex composed of at least MKT1L, PBP1, XAC1 and LSM12.

The protein localises to the cytoplasm. Involved in post-transcriptional regulation of gene expression. The polypeptide is PBP1-interacting protein XAC1 (Trypanosoma brucei brucei (strain 927/4 GUTat10.1)).